A 521-amino-acid polypeptide reads, in one-letter code: Cytochrome P450 monooxygenase ABA2 (521 aa).

A helical transmembrane segment spans residues 15-35 (AGHLGMAVTFTILVAFTIHVL). N-linked (GlcNAc...) asparagine glycosylation occurs at Asn-366. Cys-458 serves as a coordination point for heme.

Belongs to the cytochrome P450 family. It depends on heme as a cofactor.

It is found in the membrane. Its pathway is hormone biosynthesis. Its function is as follows. Cytochrome P450 monooxygenase involved in the biosynthesis of abscisic acid (ABA), a phytohormone that acts antagonistically toward salicylic acid (SA), jasmonic acid (JA) and ethylene (ETH) signaling, to impede plant defense responses. During pathogen-host interaction, ABA plays a dual role in disease severity by increasing plant susceptibility and accelerating pathogenesis in the fungus itself. The first step of the pathway catalyzes the reaction from farnesyl diphosphate to alpha-ionylideneethane performed by the alpha-ionylideneethane synthase ABA3 via a three-step reaction mechanism involving 2 neutral intermediates, beta-farnesene and allofarnesene. The cytochrome P450 monooxygenase ABA1 might then be involved in the conversion of alpha-ionylideneethane to alpha-ionylideneacetic acid. Alpha-ionylideneacetic acid is further converted to abscisic acid in 2 steps involving the cytochrome P450 monooxygenase ABA2 and the short-chain dehydrogenase/reductase ABA4, via the intermediates 1'-deoxy-ABA or 1',4'-trans-diol-ABA, depending on the order of action of these 2 enzymes. ABA2 is responsible for the hydroxylation of carbon atom C-1' and ABA4 might be involved in the oxidation of the C-4' carbon atom. In Pyricularia oryzae (strain 70-15 / ATCC MYA-4617 / FGSC 8958) (Rice blast fungus), this protein is Cytochrome P450 monooxygenase ABA2.